A 177-amino-acid chain; its full sequence is Large ribosomal subunit protein uL6 (177 aa).

The segment covering 152–171 (RPPEPYKGKGVRYDDEEVRR) has biased composition (basic and acidic residues). The interval 152–177 (RPPEPYKGKGVRYDDEEVRRKEAKKK) is disordered.

Belongs to the universal ribosomal protein uL6 family. In terms of assembly, part of the 50S ribosomal subunit.

Functionally, this protein binds to the 23S rRNA, and is important in its secondary structure. It is located near the subunit interface in the base of the L7/L12 stalk, and near the tRNA binding site of the peptidyltransferase center. This chain is Large ribosomal subunit protein uL6, found in Shewanella sp. (strain ANA-3).